We begin with the raw amino-acid sequence, 175 residues long: Ribosome maturation factor RimM (175 aa).

In terms of domain architecture, PRC barrel spans 99–172 (ADEYHVSDLI…RLEVDAPPGL (74 aa)).

The protein belongs to the RimM family. Binds ribosomal protein uS19.

It localises to the cytoplasm. In terms of biological role, an accessory protein needed during the final step in the assembly of 30S ribosomal subunit, possibly for assembly of the head region. Essential for efficient processing of 16S rRNA. May be needed both before and after RbfA during the maturation of 16S rRNA. It has affinity for free ribosomal 30S subunits but not for 70S ribosomes. The chain is Ribosome maturation factor RimM from Picosynechococcus sp. (strain ATCC 27264 / PCC 7002 / PR-6) (Agmenellum quadruplicatum).